Consider the following 125-residue polypeptide: Prepro-urotensin II-gamma (125 aa).

The N-terminal stretch at 1 to 21 is a signal peptide; that stretch reads MMCNLLLSCSVLLLSCSHLLA. Residues 109-111 constitute a propeptide that is removed on maturation; the sequence is QFR. A disulfide bridge connects residues Cys-119 and Cys-124.

This sequence belongs to the urotensin-2 family.

Its subcellular location is the secreted. Its function is as follows. Urotensin is found in the teleost caudal neurosecretory system. It has a suggested role in osmoregulation and as a corticotropin-releasing factor. The non-hormonal portion of this precursor may be a urotensin binding protein, urophysin. This Cyprinus carpio (Common carp) protein is Prepro-urotensin II-gamma.